Consider the following 79-residue polypeptide: RNA-binding protein Hfq (79 aa).

The Sm domain occupies 10-70 (DAFLNHVRKT…ISTIMPAQPI (61 aa)).

It belongs to the Hfq family. In terms of assembly, homohexamer.

Its function is as follows. RNA chaperone that binds small regulatory RNA (sRNAs) and mRNAs to facilitate mRNA translational regulation in response to envelope stress, environmental stress and changes in metabolite concentrations. Also binds with high specificity to tRNAs. This chain is RNA-binding protein Hfq, found in Ruegeria sp. (strain TM1040) (Silicibacter sp.).